We begin with the raw amino-acid sequence, 209 residues long: Large ribosomal subunit protein uL4 (209 aa).

This sequence belongs to the universal ribosomal protein uL4 family. In terms of assembly, part of the 50S ribosomal subunit.

One of the primary rRNA binding proteins, this protein initially binds near the 5'-end of the 23S rRNA. It is important during the early stages of 50S assembly. It makes multiple contacts with different domains of the 23S rRNA in the assembled 50S subunit and ribosome. Its function is as follows. Forms part of the polypeptide exit tunnel. In Borrelia duttonii (strain Ly), this protein is Large ribosomal subunit protein uL4.